The sequence spans 68 residues: Protein ShdD (68 aa).

Its function is as follows. Involved in the non-oxidative decarboxylation and detoxification of phenolic derivatives under anaerobic conditions, however the precise biochemical function of ShdD in metabolism of phenolic acid is unknown. This chain is Protein ShdD, found in Sedimentibacter hydroxybenzoicus (Clostridium hydroxybenzoicum).